The primary structure comprises 493 residues: Probable cytosol aminopeptidase (493 aa).

Lys-258 and Asp-263 together coordinate Mn(2+). Lys-270 is a catalytic residue. Residues Asp-281, Asp-340, and Glu-342 each coordinate Mn(2+). The active site involves Arg-344.

The protein belongs to the peptidase M17 family. Mn(2+) is required as a cofactor.

It is found in the cytoplasm. The enzyme catalyses Release of an N-terminal amino acid, Xaa-|-Yaa-, in which Xaa is preferably Leu, but may be other amino acids including Pro although not Arg or Lys, and Yaa may be Pro. Amino acid amides and methyl esters are also readily hydrolyzed, but rates on arylamides are exceedingly low.. The catalysed reaction is Release of an N-terminal amino acid, preferentially leucine, but not glutamic or aspartic acids.. Its function is as follows. Presumably involved in the processing and regular turnover of intracellular proteins. Catalyzes the removal of unsubstituted N-terminal amino acids from various peptides. The polypeptide is Probable cytosol aminopeptidase (Caulobacter vibrioides (strain ATCC 19089 / CIP 103742 / CB 15) (Caulobacter crescentus)).